Here is a 289-residue protein sequence, read N- to C-terminus: DDRGK domain-containing protein 1 (289 aa).

At 1 to 2 the chain is on the lumenal side; sequence MD. Residues 3 to 23 traverse the membrane as a helical segment; the sequence is PFILAAIISGIVIIILSIAFL. At 24–289 the chain is on the cytoplasmic side; sequence RVSQVKPQAA…LINLAPVTVP (266 aa). The interval 65-168 is disordered; the sequence is RHQAALEEEP…DERKKREQEE (104 aa). A compositionally biased stretch (acidic residues) spans 70–85; the sequence is LEEEPEIQEEADEGAP. Over residues 87-166 the composition is skewed to basic and acidic residues; sequence IDQKIDFDDK…AEDERKKREQ (80 aa).

Belongs to the DDRGK1 family. As to quaternary structure, interacts with Atg9; the interaction is transient.

It localises to the endoplasmic reticulum membrane. Functionally, substrate adapter for ufmylation, the covalent attachment of the ubiquitin-like modifier UFM1 to substrate proteins. Required for ufmylation of Atg9; protects the nervous system during aging, possibly by stabilizing Atg9 and supporting its function. This is DDRGK domain-containing protein 1 from Bombyx mori (Silk moth).